The following is a 241-amino-acid chain: Deoxyribose-phosphate aldolase (241 aa).

Aspartate 95 functions as the Proton donor/acceptor in the catalytic mechanism. The active-site Schiff-base intermediate with acetaldehyde is the lysine 159. The active-site Proton donor/acceptor is lysine 188.

This sequence belongs to the DeoC/FbaB aldolase family. DeoC type 1 subfamily.

It is found in the cytoplasm. The enzyme catalyses 2-deoxy-D-ribose 5-phosphate = D-glyceraldehyde 3-phosphate + acetaldehyde. The protein operates within carbohydrate degradation; 2-deoxy-D-ribose 1-phosphate degradation; D-glyceraldehyde 3-phosphate and acetaldehyde from 2-deoxy-alpha-D-ribose 1-phosphate: step 2/2. Functionally, catalyzes a reversible aldol reaction between acetaldehyde and D-glyceraldehyde 3-phosphate to generate 2-deoxy-D-ribose 5-phosphate. This is Deoxyribose-phosphate aldolase from Rhodopirellula baltica (strain DSM 10527 / NCIMB 13988 / SH1).